A 156-amino-acid polypeptide reads, in one-letter code: Rhombotin-1 (156 aa).

LIM zinc-binding domains are found at residues 22-84 (KGCA…LFGT) and 86-148 (GNCA…GQLN).

The protein resides in the nucleus. In terms of biological role, may be involved in gene regulation within neural lineage cells potentially by direct DNA binding or by binding to other transcription factors. The polypeptide is Rhombotin-1 (Xenopus laevis (African clawed frog)).